Consider the following 322-residue polypeptide: Transmembrane protein 171 (322 aa).

A run of 4 helical transmembrane segments spans residues 22 to 42, 57 to 77, 112 to 132, and 159 to 179; these read IFFLFVFGAALLCVGVLLSIF, IVLKIAGPSCAVVGLGAVILA, LIFGFLFLTSGMLISILGIWV, and FLSLQIMGPLVVLVGLCFFVV. The interval 223-322 is disordered; it reads PPPYFPESSA…LGAPSDASPP (100 aa). The span at 228–241 shows a compositional bias: low complexity; the sequence is PESSAAAPSPGANS. Polar residues-rich tracts occupy residues 242–267 and 279–289; these read LHQIENPPSYSSLFNYGTPTPENQGA and ISGQGSSSERS.

The protein resides in the membrane. This chain is Transmembrane protein 171 (Tmem171), found in Mus musculus (Mouse).